A 1256-amino-acid chain; its full sequence is Bifunctional autolysin (1256 aa).

The first 29 residues, 1-29, serve as a signal peptide directing secretion; sequence MAKKFNYKLPSMVALTLVGSAVTAHQVQA. Positions 103–138 are enriched in polar residues; it reads GDTRANQSATTNNTQPVAKSTSTTAPKTNTNVTNAG. Disordered regions lie at residues 103-151, 172-219, and 419-440; these read GDTR…NSEN, KTAA…KYKP, and TQSTTTPTTPSKPTTPSKPSTG. Low complexity-rich tracts occupy residues 172-196 and 421-439; these read KTAAPKAATTSAPKAKTEATPKVTT and STTTPTTPSKPTTPSKPST. The N-acetylmuramoyl-L-alanine amidase stretch occupies residues 199–775; that stretch reads ASAQPRSVAA…AVAQPKTAVK (577 aa). GW domains follow at residues 443–517, 519–593, 612–686, 688–762, 784–859, 861–936, and 943–1017; these read TVAA…YNTA, SPVN…DTAK, TVSS…YNNA, SPVN…VPAA, TTQT…VQNL, KEVK…APTA, and AAKD…KELI. An endo-beta-N-acetylglucosaminidase region spans residues 776–1256; it reads AYTVTKPQTT…GKYFDIPQYK (481 aa).

The protein in the N-terminal section; belongs to the N-acetylmuramoyl-L-alanine amidase 2 family. It in the C-terminal section; belongs to the glycosyl hydrolase 73 family. In terms of assembly, oligomer; forms a ring structure at the cell surface which is important for efficient partitioning of daughter cells after cell division. In terms of processing, undergoes proteolytic processing to generate the two extracellular lytic enzymes, probably at the septal region on the cell surface.

The protein localises to the secreted. It carries out the reaction Hydrolyzes the link between N-acetylmuramoyl residues and L-amino acid residues in certain cell-wall glycopeptides.. The enzyme catalyses an N(4)-(oligosaccharide-(1-&gt;3)-[oligosaccharide-(1-&gt;6)]-beta-D-Man-(1-&gt;4)-beta-D-GlcNAc-(1-&gt;4)-alpha-D-GlcNAc)-L-asparaginyl-[protein] + H2O = an oligosaccharide-(1-&gt;3)-[oligosaccharide-(1-&gt;6)]-beta-D-Man-(1-&gt;4)-D-GlcNAc + N(4)-(N-acetyl-beta-D-glucosaminyl)-L-asparaginyl-[protein]. Its function is as follows. Endohydrolysis of the di-N-acetylchitobiosyl unit in high-mannose glycopeptides and glycoproteins containing the -[(Man)5(GlcNAc)2]-Asn structure. One N-acetyl-D-glucosamine residue remains attached to the protein; the rest of the oligosaccharide is released intact. Cleaves the peptidoglycan connecting the daughter cells at the end of the cell division cycle, resulting in the separation of the two newly divided cells. Acts as an autolysin in penicillin-induced lysis. The chain is Bifunctional autolysin (atl) from Staphylococcus aureus (strain COL).